The following is a 231-amino-acid chain: Flagellar L-ring protein (231 aa).

A signal peptide spans 1 to 18 (MNRLLSVFALGGAVLLAG). C19 carries the N-palmitoyl cysteine lipid modification. C19 carries S-diacylglycerol cysteine lipidation.

It belongs to the FlgH family. In terms of assembly, the basal body constitutes a major portion of the flagellar organelle and consists of four rings (L,P,S, and M) mounted on a central rod.

It localises to the cell outer membrane. It is found in the bacterial flagellum basal body. Assembles around the rod to form the L-ring and probably protects the motor/basal body from shearing forces during rotation. The chain is Flagellar L-ring protein from Pseudomonas putida (strain GB-1).